Reading from the N-terminus, the 348-residue chain is Small ribosomal subunit biogenesis GTPase RsgA (348 aa).

One can recognise a CP-type G domain in the interval 72 to 230; it reads RNQLSRPAIA…IADTPGFNQP (159 aa). Residues 121–124 and 172–180 each bind GTP; these read TKAD and GPSGVGKSS. Zn(2+)-binding residues include Cys255, Cys260, His262, and Cys268. Residues 305–322 show a composition bias toward basic and acidic residues; sequence AKSDRQGQQRLEPLLDAK. Positions 305-348 are disordered; sequence AKSDRQGQQRLEPLLDAKKYRRRSRRQQHQHVNPMAEEVLDSEW. Over residues 323–333 the composition is skewed to basic residues; it reads KYRRRSRRQQH.

Belongs to the TRAFAC class YlqF/YawG GTPase family. RsgA subfamily. In terms of assembly, monomer. Associates with 30S ribosomal subunit, binds 16S rRNA. It depends on Zn(2+) as a cofactor.

The protein localises to the cytoplasm. Its function is as follows. One of several proteins that assist in the late maturation steps of the functional core of the 30S ribosomal subunit. Helps release RbfA from mature subunits. May play a role in the assembly of ribosomal proteins into the subunit. Circularly permuted GTPase that catalyzes slow GTP hydrolysis, GTPase activity is stimulated by the 30S ribosomal subunit. This chain is Small ribosomal subunit biogenesis GTPase RsgA, found in Thermosynechococcus vestitus (strain NIES-2133 / IAM M-273 / BP-1).